We begin with the raw amino-acid sequence, 293 residues long: ATP synthase subunit gamma, mitochondrial (293 aa).

Residues 1–21 (MFALRTAARPAARSVGATRNY) constitute a mitochondrion transit peptide.

As to quaternary structure, F-type ATP synthases have 2 components, the catalytic core F(1) and the membrane-embedded component F(0), linked together by a central stalk and a peripheral stalk. The central stalk, also called rotor shaft, is often seen as part of F(1). The peripheral stalk is seen as part of F(0). F(0) contains the membrane channel next to the rotor. F-type ATP synthases form dimers but each monomer functions independently in ATP generation. The dimer consists of 17 different polypeptides: ATP1 (subunit alpha, 3 molecules per monomer, part of F(1)), ATP2 (subunit beta, 3 copies per monomer, part of F(1)), ATP3 (subunit gamma, part of the central stalk), ATP4 (subunit b, part of the peripheral stalk), ATP5/OSCP (subunit 5/OSCP, part of the peripheral stalk), ATP6 (subunit a, part of the peripheral stalk), ATP7 (subunit d, part of the peripheral stalk), ATP8 (subunit 8, part of the peripheral stalk), OLI1 (subunit c, part of the rotor, 10 molecules per monomer), ATP14 (subunit h, part of the peripheral stalk), ATP15 (subunit epsilon, part of the central stalk), ATP16 (subunit delta, part of the central stalk), ATP17 (subunit f, part of the peripheral stalk), ATP18 (subunit i/j, part of the peripheral stalk), ATP19 (subunit k, dimer-specific, at interface between monomers), ATP20 (subunit g, at interface between monomers), TIM11 (subunit e, at interface between monomers).

It is found in the mitochondrion inner membrane. Mitochondrial membrane ATP synthase (F(1)F(0) ATP synthase or Complex V) produces ATP from ADP in the presence of a proton gradient across the membrane which is generated by electron transport complexes of the respiratory chain. F-type ATP synthases consist of two structural domains, F(1) - containing the extramembraneous catalytic core, and F(0) - containing the membrane proton channel, linked together by a central stalk and a peripheral stalk. During catalysis, ATP synthesis in the catalytic domain of F(1) is coupled via a rotary mechanism of the central stalk subunits to proton translocation. Part of the complex F(1) domain and the central stalk which is part of the complex rotary element. The gamma/ATP3 subunit protrudes into the catalytic domain formed of alpha/ATP1(3)beta/ATP2(3). Rotation of the central stalk against the surrounding alpha/ATP1(3)beta/ATP2(3) subunits leads to hydrolysis of ATP in three separate catalytic sites on the beta/ATP2 subunits. The sequence is that of ATP synthase subunit gamma, mitochondrial from Yarrowia lipolytica (strain CLIB 122 / E 150) (Yeast).